The sequence spans 37 residues: Large ribosomal subunit protein bL36c (37 aa).

Belongs to the bacterial ribosomal protein bL36 family.

It localises to the plastid. Its subcellular location is the chloroplast. The polypeptide is Large ribosomal subunit protein bL36c (Lepidium virginicum (Virginia pepperweed)).